The chain runs to 232 residues: Ribosomal RNA large subunit methyltransferase E (232 aa).

5 residues coordinate S-adenosyl-L-methionine: G64, W66, D97, D113, and D138. The active-site Proton acceptor is the K178.

Belongs to the class I-like SAM-binding methyltransferase superfamily. RNA methyltransferase RlmE family.

The protein resides in the cytoplasm. It carries out the reaction uridine(2552) in 23S rRNA + S-adenosyl-L-methionine = 2'-O-methyluridine(2552) in 23S rRNA + S-adenosyl-L-homocysteine + H(+). Its function is as follows. Specifically methylates the uridine in position 2552 of 23S rRNA at the 2'-O position of the ribose in the fully assembled 50S ribosomal subunit. This chain is Ribosomal RNA large subunit methyltransferase E, found in Leptothrix cholodnii (strain ATCC 51168 / LMG 8142 / SP-6) (Leptothrix discophora (strain SP-6)).